The chain runs to 308 residues: Ribosomal RNA large subunit methyltransferase F (308 aa).

This sequence belongs to the methyltransferase superfamily. METTL16/RlmF family.

The protein resides in the cytoplasm. It carries out the reaction adenosine(1618) in 23S rRNA + S-adenosyl-L-methionine = N(6)-methyladenosine(1618) in 23S rRNA + S-adenosyl-L-homocysteine + H(+). In terms of biological role, specifically methylates the adenine in position 1618 of 23S rRNA. This is Ribosomal RNA large subunit methyltransferase F from Salmonella paratyphi A (strain ATCC 9150 / SARB42).